Consider the following 379-residue polypeptide: Flap endonuclease 1 (379 aa).

The segment at 1–105 (MGIKGLTKLL…QELAKRYSKR (105 aa)) is N-domain. Mg(2+) is bound at residue Asp34. Arg71 provides a ligand contact to DNA. Residues Asp87, Glu159, Glu161, Asp180, and Asp182 each coordinate Mg(2+). Residues 123–254 (AIEKLSKRTV…QTALKLIRQH (132 aa)) are I-domain. Residue Glu159 coordinates DNA. The DNA site is built by Gly232 and Asp234. Asp234 is a Mg(2+) binding site. The segment at 331 to 379 (AKNKSSQGRLESFFKPTATTSAPLKRKETSDKTSKAAANKKTKAGGKKK) is disordered. Residues 336–344 (SQGRLESFF) form an interaction with PCNA region. Residues 355-364 (KRKETSDKTS) are compositionally biased toward basic and acidic residues. Residues 368–379 (ANKKTKAGGKKK) show a composition bias toward basic residues.

It belongs to the XPG/RAD2 endonuclease family. FEN1 subfamily. As to quaternary structure, interacts with PCNA. Three molecules of FEN1 bind to one PCNA trimer with each molecule binding to one PCNA monomer. PCNA stimulates the nuclease activity without altering cleavage specificity. It depends on Mg(2+) as a cofactor. Post-translationally, phosphorylated. Phosphorylation upon DNA damage induces relocalization to the nuclear plasma.

Its subcellular location is the nucleus. It localises to the nucleolus. It is found in the nucleoplasm. The protein localises to the mitochondrion. Its function is as follows. Structure-specific nuclease with 5'-flap endonuclease and 5'-3' exonuclease activities involved in DNA replication and repair. During DNA replication, cleaves the 5'-overhanging flap structure that is generated by displacement synthesis when DNA polymerase encounters the 5'-end of a downstream Okazaki fragment. It enters the flap from the 5'-end and then tracks to cleave the flap base, leaving a nick for ligation. Also involved in the long patch base excision repair (LP-BER) pathway, by cleaving within the apurinic/apyrimidinic (AP) site-terminated flap. Acts as a genome stabilization factor that prevents flaps from equilibrating into structures that lead to duplications and deletions. Also possesses 5'-3' exonuclease activity on nicked or gapped double-stranded DNA, and exhibits RNase H activity. Also involved in replication and repair of rDNA and in repairing mitochondrial DNA. The sequence is that of Flap endonuclease 1 from Zea mays (Maize).